Reading from the N-terminus, the 40-residue chain is Photosystem II reaction center protein J (40 aa).

The chain crosses the membrane as a helical span at residues 8–28; sequence IPLWIIGTGAGILVIGLIGIF.

It belongs to the PsbJ family. In terms of assembly, PSII is composed of 1 copy each of membrane proteins PsbA, PsbB, PsbC, PsbD, PsbE, PsbF, PsbH, PsbI, PsbJ, PsbK, PsbL, PsbM, PsbT, PsbX, PsbY, PsbZ, Psb30/Ycf12, at least 3 peripheral proteins of the oxygen-evolving complex and a large number of cofactors. It forms dimeric complexes.

It is found in the plastid. The protein localises to the chloroplast thylakoid membrane. One of the components of the core complex of photosystem II (PSII). PSII is a light-driven water:plastoquinone oxidoreductase that uses light energy to abstract electrons from H(2)O, generating O(2) and a proton gradient subsequently used for ATP formation. It consists of a core antenna complex that captures photons, and an electron transfer chain that converts photonic excitation into a charge separation. The sequence is that of Photosystem II reaction center protein J from Aethionema grandiflorum (Persian stone-cress).